Here is a 312-residue protein sequence, read N- to C-terminus: Protoheme IX farnesyltransferase (312 aa).

The next 8 helical transmembrane spans lie at L34–L54, F56–L76, A119–I139, I152–G172, L179–F199, I225–F245, W247–V267, and L283–L303.

This sequence belongs to the UbiA prenyltransferase family. Protoheme IX farnesyltransferase subfamily.

Its subcellular location is the cell inner membrane. The enzyme catalyses heme b + (2E,6E)-farnesyl diphosphate + H2O = Fe(II)-heme o + diphosphate. It functions in the pathway porphyrin-containing compound metabolism; heme O biosynthesis; heme O from protoheme: step 1/1. Its function is as follows. Converts heme B (protoheme IX) to heme O by substitution of the vinyl group on carbon 2 of heme B porphyrin ring with a hydroxyethyl farnesyl side group. This is Protoheme IX farnesyltransferase from Nitrobacter hamburgensis (strain DSM 10229 / NCIMB 13809 / X14).